A 171-amino-acid polypeptide reads, in one-letter code: MVKPGQILRAAVRETAEPLTELAGDSVSSAGRVSAAYHAIRNAIRTNVFPPGYQAAEIEIARQLGMSRTPVHEAMARLQEDGLVRILPKKGIIICALSPADIEEIYEVTIALEGAAASRLAMIDAPVKAEVVALLRDATEAMVAALERNDLPGWAAADERFHETLVACAAQ.

Residues 30-97 (AGRVSAAYHA…PKKGIIICAL (68 aa)) enclose the HTH gntR-type domain. Residues 57–76 (EIEIARQLGMSRTPVHEAMA) constitute a DNA-binding region (H-T-H motif).

This is an uncharacterized protein from Agrobacterium vitis (Rhizobium vitis).